Consider the following 111-residue polypeptide: Large ribosomal subunit protein P1 (111 aa).

Positions alanine 75–phenylalanine 111 are disordered. The segment covering lysine 88–aspartate 101 has biased composition (acidic residues).

It belongs to the eukaryotic ribosomal protein P1/P2 family. As to quaternary structure, part of the 50S ribosomal subunit. Homodimer, it forms part of the ribosomal stalk which helps the ribosome interact with GTP-bound translation factors. Forms a heptameric uL10/P0(P1)2(P1)2(P1)2 complex, where uL10/P0 forms an elongated spine to which the P1 dimers bind in a sequential fashion.

Its function is as follows. Forms part of the ribosomal stalk, playing a central role in the interaction of the ribosome with GTP-bound translation factors. This chain is Large ribosomal subunit protein P1, found in Aeropyrum pernix (strain ATCC 700893 / DSM 11879 / JCM 9820 / NBRC 100138 / K1).